Reading from the N-terminus, the 489-residue chain is Rhamnulokinase (489 aa).

13–17 (ASSGR) lines the ATP pocket. Cys-68 and Cys-222 are joined by a disulfide. Substrate-binding positions include Gly-83 and 236–238 (HDT). Asp-237 serves as the catalytic Proton acceptor. Residue Thr-259 coordinates ATP. Asn-296 contributes to the substrate binding site. Gln-304 provides a ligand contact to ATP. Cys-353 and Cys-370 are disulfide-bonded. Gly-402 lines the ATP pocket. Cys-413 and Cys-417 form a disulfide bridge.

This sequence belongs to the rhamnulokinase family. Mg(2+) is required as a cofactor.

It carries out the reaction L-rhamnulose + ATP = L-rhamnulose 1-phosphate + ADP + H(+). The protein operates within carbohydrate degradation; L-rhamnose degradation; glycerone phosphate from L-rhamnose: step 2/3. Functionally, involved in the catabolism of L-rhamnose (6-deoxy-L-mannose). Catalyzes the transfer of the gamma-phosphate group from ATP to the 1-hydroxyl group of L-rhamnulose to yield L-rhamnulose 1-phosphate. This is Rhamnulokinase from Salmonella typhimurium (strain LT2 / SGSC1412 / ATCC 700720).